We begin with the raw amino-acid sequence, 43 residues long: Protein PsbN (43 aa).

Residues 7-27 (LIVFIASLLLGVTGYSVYTAF) form a helical membrane-spanning segment.

Belongs to the PsbN family.

The protein resides in the plastid. The protein localises to the chloroplast thylakoid membrane. Its function is as follows. May play a role in photosystem I and II biogenesis. In Rhodomonas salina (Cryptomonas salina), this protein is Protein PsbN.